Reading from the N-terminus, the 466-residue chain is Ribulose bisphosphate carboxylase large chain (466 aa).

Lys-5 carries the N6,N6,N6-trimethyllysine modification. Substrate-binding residues include Asn-114 and Thr-164. Lys-166 (proton acceptor) is an active-site residue. Lys-168 contributes to the substrate binding site. Mg(2+) is bound by residues Lys-192, Asp-194, and Glu-195. The residue at position 192 (Lys-192) is an N6-carboxylysine. His-285 (proton acceptor) is an active-site residue. The substrate site is built by Arg-286, His-318, and Ser-370.

The protein belongs to the RuBisCO large chain family. Type I subfamily. Heterohexadecamer of 8 large chains and 8 small chains; disulfide-linked. The disulfide link is formed within the large subunit homodimers. It depends on Mg(2+) as a cofactor. Post-translationally, the disulfide bond which can form in the large chain dimeric partners within the hexadecamer appears to be associated with oxidative stress and protein turnover.

It is found in the plastid. The protein localises to the chloroplast. It carries out the reaction 2 (2R)-3-phosphoglycerate + 2 H(+) = D-ribulose 1,5-bisphosphate + CO2 + H2O. It catalyses the reaction D-ribulose 1,5-bisphosphate + O2 = 2-phosphoglycolate + (2R)-3-phosphoglycerate + 2 H(+). In terms of biological role, ruBisCO catalyzes two reactions: the carboxylation of D-ribulose 1,5-bisphosphate, the primary event in carbon dioxide fixation, as well as the oxidative fragmentation of the pentose substrate in the photorespiration process. Both reactions occur simultaneously and in competition at the same active site. This chain is Ribulose bisphosphate carboxylase large chain, found in Adenium obesum (Desert rose).